A 158-amino-acid chain; its full sequence is Lysozyme C (158 aa).

The first 18 residues, 1-18, serve as a signal peptide directing secretion; sequence MRVLPLALLVGLLAVSDA. The 132-residue stretch at 19-150 folds into the C-type lysozyme domain; sequence KVLGKCEFAR…DQYMAECWSR (132 aa). 4 disulfide bridges follow: Cys-24-Cys-147, Cys-46-Cys-135, Cys-80-Cys-93, and Cys-89-Cys-107. Active-site residues include Glu-51 and Asp-68.

Belongs to the glycosyl hydrolase 22 family. Monomer. Strongly expressed in gill and gonad, and marginally detectable in hemolymph and lymphoid organ. Not expressed in kidney, hepatopancreas or tail muscle.

The protein localises to the secreted. The catalysed reaction is Hydrolysis of (1-&gt;4)-beta-linkages between N-acetylmuramic acid and N-acetyl-D-glucosamine residues in a peptidoglycan and between N-acetyl-D-glucosamine residues in chitodextrins.. In terms of biological role, lysozymes have primarily a bacteriolytic function; those in tissues and body fluids are associated with the monocyte-macrophage system and enhance the activity of immunoagents. Has bacteriolytic activity against Gram-positive bacterium M.luteus, and Gram-negative shrimp pathogenic bacteria V.alginolyticus, V.parahaemolyticus and V.vulnificus. May play a role in host defense. This Penaeus merguiensis (Banana prawn) protein is Lysozyme C.